Reading from the N-terminus, the 637-residue chain is MTYTLLNKIDDPADLRKLDRRQLDTLAEELRAYVLESVSQTGGHLSSNLGTVELTIALHYVFDTPNDRVVWDVGHQSYPHKILTGRRDRMSTLRQYGGISGFPRRAESEYDTFGTAHSSTSISAALGMALGARTRGEKRVGIAVIGDGAMTAGMAFEAMNNAGVYKDLPMLVVLNDNDMSISPPVGMLNKHLARLMSGQFYAATKKGIEKVLSVAPPVLEFAKRLEEHAKGMVVPATLFEEFGFDYVGPIDGHDLESLVPTLQNIRQRALEGHGPQFLHVVTKKGQGYKLAEADPILYHGPGKFNPAEGIRPSAKPSRKTYTQVFGEWLCDMAAADKRLIGVTPAMREGSGMVEFEKRFPDRYYDVGIAEQHAVTFAGGLACEGLKPVVAIYSTFLQRGYDQLIHDVALQNLPVVFALDRAGLVGADGATHAGVYDIPFLRCIPNMMVMVPADENECRQLLTTAFQQDCPTAVRYPRGAGVGVATQPELTALPVGKGEIRREGHARAGQRVAIMAFGSMVHPALTAAEQLDATVANMRFVKPLDVELVKQLAANHDFLVTVEEGATMGGAGSAVLEALAEAGIELPTLVLGLPDKFIDHGDPAHLLSLCGLDAAGIERSVRERFSLTAQPVKVASVA.

Residues His75 and Ala116–Ser118 each bind thiamine diphosphate. Asp147 contributes to the Mg(2+) binding site. Thiamine diphosphate is bound by residues Gly148–Ala149, Asn177, Tyr288, and Glu370. Position 177 (Asn177) interacts with Mg(2+).

This sequence belongs to the transketolase family. DXPS subfamily. As to quaternary structure, homodimer. Mg(2+) is required as a cofactor. Requires thiamine diphosphate as cofactor.

The catalysed reaction is D-glyceraldehyde 3-phosphate + pyruvate + H(+) = 1-deoxy-D-xylulose 5-phosphate + CO2. The protein operates within metabolic intermediate biosynthesis; 1-deoxy-D-xylulose 5-phosphate biosynthesis; 1-deoxy-D-xylulose 5-phosphate from D-glyceraldehyde 3-phosphate and pyruvate: step 1/1. Functionally, catalyzes the acyloin condensation reaction between C atoms 2 and 3 of pyruvate and glyceraldehyde 3-phosphate to yield 1-deoxy-D-xylulose-5-phosphate (DXP). The chain is 1-deoxy-D-xylulose-5-phosphate synthase from Cupriavidus metallidurans (strain ATCC 43123 / DSM 2839 / NBRC 102507 / CH34) (Ralstonia metallidurans).